The sequence spans 136 residues: Large ribosomal subunit protein uL13 (136 aa).

The protein belongs to the universal ribosomal protein uL13 family. As to quaternary structure, part of the 50S ribosomal subunit.

This protein is one of the early assembly proteins of the 50S ribosomal subunit, although it is not seen to bind rRNA by itself. It is important during the early stages of 50S assembly. The protein is Large ribosomal subunit protein uL13 of Thermoplasma acidophilum (strain ATCC 25905 / DSM 1728 / JCM 9062 / NBRC 15155 / AMRC-C165).